Here is a 601-residue protein sequence, read N- to C-terminus: Cdc42-interacting protein 4 (601 aa).

Positions 1–117 (MDWGTELWDQ…EMKQERKMHF (117 aa)) are required for translocation to the plasma membrane in response to insulin, podosome formation and interaction with AKAP9 and microtubules. Residues 1-264 (MDWGTELWDQ…AANAVDPKND (264 aa)) form the F-BAR domain. Positions 67-259 (FSQQQSFVQI…EGMKVAANAV (193 aa)) form a coiled coil. Disordered stretches follow at residues 280-358 (GDVE…GRDP), 390-420 (DFSHLPPEQQRKRLQQQLEERSRELQKEVDQ), and 478-543 (NRGD…SPIG). A compositionally biased stretch (polar residues) spans 289–302 (QPMNRAPSDSSLGT). Positions 293 to 537 (RAPSDSSLGT…TEFDEDFEEE (245 aa)) are interaction with CDC42. An interaction with PDE6G region spans residues 293–601 (RAPSDSSLGT…PTSYLRVTLN (309 aa)). Ser-296, Ser-298, and Ser-299 each carry phosphoserine. Over residues 314-329 (GRSRTKRWPFGKKNKP) the composition is skewed to basic residues. Ser-335 is modified (phosphoserine). Low complexity predominate over residues 336 to 346 (PLGGPVPSALP). Ser-351 is subject to Phosphoserine. Residues 388–481 (TEDFSHLPPE…ESRVLSNRGD (94 aa)) adopt a coiled-coil conformation. An REM-1 domain is found at 393–470 (HLPPEQQRKR…VQKYEAWLAE (78 aa)). Positions 407 to 420 (LEERSRELQKEVDQ) are enriched in basic and acidic residues. The tract at residues 471–601 (AESRVLSNRG…PTSYLRVTLN (131 aa)) is required for interaction with FASLG and localization to lysosomes. Ser-482 carries the phosphoserine modification. The tract at residues 487-541 (ARPPDPPTSAPPDSSSNSASQDTKESSEEPPSEESQDTPIYTEFDEDFEEEPTSP) is interaction with DNM2 and WASL. The span at 497-506 (PPDSSSNSAS) shows a compositional bias: low complexity. Residues 529 to 538 (EFDEDFEEEP) show a composition bias toward acidic residues. The tract at residues 529–601 (EFDEDFEEEP…PTSYLRVTLN (73 aa)) is interaction with DNM1 and WASL. The segment at 538-601 (PTSPIGHCVA…PTSYLRVTLN (64 aa)) is required for podosome formation. The 62-residue stretch at 540-601 (SPIGHCVAIY…PTSYLRVTLN (62 aa)) folds into the SH3 domain. Residues 544–601 (HCVAIYHFEGSSEGTISMAEGEDLSLMEEDKGDGWTRVRRKEGGEGYVPTSYLRVTLN) are interaction with WAS. The interval 546–601 (VAIYHFEGSSEGTISMAEGEDLSLMEEDKGDGWTRVRRKEGGEGYVPTSYLRVTLN) is interaction with ARHGAP17, DAAM1, DIAPH1 and DIAPH2.

The protein belongs to the FNBP1 family. Homodimerizes, the dimers can polymerize end-to-end to form filamentous structures. Interacts with AKAP9, ARHGAP17, DAAM1, DIAPH1, DIAPH2, DNM1, FASLG/FASL, GAPVD1, LYN, microtubules, PDE6G, SRC and WAS/WASP. Interacts with the ligand binding domain of the thyroid receptor (TR) in the presence of thyroid hormone. May interact with CTNNB1 and HD/HTT. Interacts specifically with GTP-bound CDC42 and RHOQ. Interacts with DNM2 and WASL. In terms of processing, tyrosine phosphorylated. Also phosphorylated by PKA.

Its subcellular location is the cytoplasm. The protein localises to the cytoskeleton. It localises to the cell cortex. It is found in the lysosome. The protein resides in the golgi apparatus. Its subcellular location is the cell membrane. The protein localises to the cell projection. It localises to the phagocytic cup. Its function is as follows. Required to coordinate membrane tubulation with reorganization of the actin cytoskeleton during endocytosis. Also acts as a link between CDC42 signaling and regulation of the actin cytoskeleton. Binds to lipids such as phosphatidylinositol 4,5-bisphosphate and phosphatidylserine and promotes membrane invagination and the formation of tubules. Also enhances actin polymerization in the vicinity of membrane tubules by recruiting WASL/N-WASP which in turn activates the Arp2/3 complex. Actin polymerization and dynamin may promote the fission of membrane tubules to form endocytic vesicles. Required for the formation of podosomes, actin-rich adhesion structures specific to monocyte-derived cells. Required for translocation of GLUT4 to the plasma membrane in response to insulin signaling. May be required for the lysosomal retention of FASLG/FASL. The sequence is that of Cdc42-interacting protein 4 (TRIP10) from Pongo abelii (Sumatran orangutan).